We begin with the raw amino-acid sequence, 657 residues long: Splicing factor Cactin (657 aa).

Basic residues predominate over residues 1 to 15 (MGKDSKKHKKERRRE). Disordered regions lie at residues 1-83 (MGKD…EDTL), 369-406 (QESE…ISKK), and 472-503 (ADVD…QGAS). Coiled-coil stretches lie at residues 23–77 (SDEE…RKDA) and 352–403 (RLQL…DEKI). Basic and acidic residues predominate over residues 26–60 (ERLQKRLAEQRSLKKDEKRRQKEEMKKNESAEEKR). The span at 61–72 (ARRMEKKMRKDA) shows a compositional bias: basic residues. Over residues 389-401 (EEEEEEEEDEDDE) the composition is skewed to acidic residues. The span at 489-503 (PSSSAASSGAPQGAS) shows a compositional bias: low complexity.

Belongs to the CACTIN family. In terms of tissue distribution, expressed in pharynx, intestine, vulva and spermatheca (at protein level).

The protein localises to the nucleus. The protein resides in the cytoplasm. Plays a role in pre-mRNA splicing by facilitating excision of a subset of introns. Plays a role during early embryonic development. Required for the distal tip cell migration at the end of larval development and for gonad morphogenesis. The chain is Splicing factor Cactin (cacn-1) from Caenorhabditis elegans.